The sequence spans 316 residues: Iron-sulfur cluster assembly SufBD family protein MJ0034 (316 aa).

Belongs to the iron-sulfur cluster assembly SufBD family.

This is Iron-sulfur cluster assembly SufBD family protein MJ0034 from Methanocaldococcus jannaschii (strain ATCC 43067 / DSM 2661 / JAL-1 / JCM 10045 / NBRC 100440) (Methanococcus jannaschii).